The following is a 102-amino-acid chain: Small ribosomal subunit protein uS10 (102 aa).

This sequence belongs to the universal ribosomal protein uS10 family. As to quaternary structure, part of the 30S ribosomal subunit.

In terms of biological role, involved in the binding of tRNA to the ribosomes. This Xanthobacter autotrophicus (strain ATCC BAA-1158 / Py2) protein is Small ribosomal subunit protein uS10.